Here is a 165-residue protein sequence, read N- to C-terminus: MTLEEFSAGEQKTERMDKVGDALEEVLSKALSQRTITVGVYEAAKLLNVDPDNVVLCLLAADEDDDRDVALQIHFTLIQAFCCENDINILRVSNPGRLAELLLLETDAGPAASEGAEQPPDLHCVLVTNPHSSQWKDPALSQLICFCRESRYMDQWVPVINLPER.

The residue at position 2 (threonine 2) is a Phosphothreonine.

The protein belongs to the GADD45 family. Interacts with MAPK14. Predominantly monomeric but also forms dimers and other oligomers as concentration increases. Interacts with GADD45GIP1. Interacts weakly with PCNA. Interacts with AURKA, likely to compete with dimerization.

The protein localises to the nucleus. Its function is as follows. In T-cells, functions as a regulator of p38 MAPKs by inhibiting p88 phosphorylation and activity. Might affect PCNA interaction with some CDK (cell division protein kinase) complexes; stimulates DNA excision repair in vitro and inhibits entry of cells into S phase. The sequence is that of Growth arrest and DNA damage-inducible protein GADD45 alpha (GADD45A) from Homo sapiens (Human).